The primary structure comprises 716 residues: Myogenesis-regulating glycosidase (716 aa).

The span at 1-11 (MSQNLQETSQA) shows a compositional bias: polar residues. Residues 1-26 (MSQNLQETSQAYPRHRPGSHAGPKSL) form a disordered region. At 1 to 55 (MSQNLQETSQAYPRHRPGSHAGPKSLKVTPRATMYTFLPDNFSPAKPKPTKELRP) the chain is on the cytoplasmic side. Residues 56–76 (LLCSAVLGLLLVLAAVVAWCY) traverse the membrane as a helical; Signal-anchor for type II membrane protein segment. Topologically, residues 77–716 (YSASLRKAER…DEVAYFTWAS (640 aa)) are extracellular. N-linked (GlcNAc...) asparagine glycans are attached at residues Asn239, Asn249, and Asn455. Residues Asp462 and Glu465 contribute to the active site. The Proton donor role is filled by Asp527.

This sequence belongs to the glycosyl hydrolase 31 family. As to quaternary structure, interacts with IGF2; this interaction is required for IGF2 secretion. In terms of tissue distribution, expressed in brain, liver, spleen, skeletal muscle, heart, lung and kidney. High expression is observed in the cerebellum, specifically in astrocytes. Highly expressed in skeletal muscle (at protein level).

It localises to the nucleus membrane. The protein localises to the endoplasmic reticulum membrane. Its function is as follows. Putative glycosidase. Promotes myogenesis by activating AKT signaling through the maturation and secretion of IGF2. This Mus musculus (Mouse) protein is Myogenesis-regulating glycosidase (Myorg).